A 108-amino-acid chain; its full sequence is UPF0102 protein SO_0299 (108 aa).

The protein belongs to the UPF0102 family.

This Shewanella oneidensis (strain ATCC 700550 / JCM 31522 / CIP 106686 / LMG 19005 / NCIMB 14063 / MR-1) protein is UPF0102 protein SO_0299.